Here is a 388-residue protein sequence, read N- to C-terminus: Succinate--CoA ligase [ADP-forming] subunit beta (388 aa).

One can recognise an ATP-grasp domain in the interval 9 to 244; that stretch reads KAIFRSMGVA…LEEEDPKEIE (236 aa). ATP-binding positions include K46, 53-55, E99, C102, and E107; that span reads GRG. Positions 199 and 213 each coordinate Mg(2+). Substrate is bound by residues N264 and 321-323; that span reads GIM.

It belongs to the succinate/malate CoA ligase beta subunit family. Heterotetramer of two alpha and two beta subunits. Requires Mg(2+) as cofactor.

It catalyses the reaction succinate + ATP + CoA = succinyl-CoA + ADP + phosphate. The catalysed reaction is GTP + succinate + CoA = succinyl-CoA + GDP + phosphate. The protein operates within carbohydrate metabolism; tricarboxylic acid cycle; succinate from succinyl-CoA (ligase route): step 1/1. Its function is as follows. Succinyl-CoA synthetase functions in the citric acid cycle (TCA), coupling the hydrolysis of succinyl-CoA to the synthesis of either ATP or GTP and thus represents the only step of substrate-level phosphorylation in the TCA. The beta subunit provides nucleotide specificity of the enzyme and binds the substrate succinate, while the binding sites for coenzyme A and phosphate are found in the alpha subunit. The protein is Succinate--CoA ligase [ADP-forming] subunit beta of Staphylococcus saprophyticus subsp. saprophyticus (strain ATCC 15305 / DSM 20229 / NCIMB 8711 / NCTC 7292 / S-41).